The primary structure comprises 96 residues: UPF0235 protein Helmi_20270 (96 aa).

This sequence belongs to the UPF0235 family.

This is UPF0235 protein Helmi_20270 from Heliobacterium modesticaldum (strain ATCC 51547 / Ice1).